Here is a 300-residue protein sequence, read N- to C-terminus: N-acetylmuramic acid 6-phosphate etherase (300 aa).

The SIS domain occupies 57-220; sequence IAVAFQSGGR…TTGAMIRTGK (164 aa). The active-site Proton donor is Glu-85. Residue Glu-116 is part of the active site.

It belongs to the GCKR-like family. MurNAc-6-P etherase subfamily. As to quaternary structure, homodimer.

It catalyses the reaction N-acetyl-D-muramate 6-phosphate + H2O = N-acetyl-D-glucosamine 6-phosphate + (R)-lactate. It participates in amino-sugar metabolism; 1,6-anhydro-N-acetylmuramate degradation. It functions in the pathway amino-sugar metabolism; N-acetylmuramate degradation. Its pathway is cell wall biogenesis; peptidoglycan recycling. Its function is as follows. Specifically catalyzes the cleavage of the D-lactyl ether substituent of MurNAc 6-phosphate, producing GlcNAc 6-phosphate and D-lactate. Together with AnmK, is also required for the utilization of anhydro-N-acetylmuramic acid (anhMurNAc) either imported from the medium or derived from its own cell wall murein, and thus plays a role in cell wall recycling. The chain is N-acetylmuramic acid 6-phosphate etherase from Aliivibrio fischeri (strain MJ11) (Vibrio fischeri).